A 111-amino-acid polypeptide reads, in one-letter code: Small ribosomal subunit protein bS16 (111 aa).

The segment at 92-111 is disordered; the sequence is MEVKAKNRKARPSKKEDKEA.

It belongs to the bacterial ribosomal protein bS16 family.

This Rickettsia massiliae (strain Mtu5) protein is Small ribosomal subunit protein bS16.